A 184-amino-acid polypeptide reads, in one-letter code: Photosystem I assembly protein Ycf4 (184 aa).

The next 2 membrane-spanning stretches (helical) occupy residues 22–42 (FCWA…GTSS) and 57–77 (IIFF…LFIS).

Belongs to the Ycf4 family.

Its subcellular location is the plastid. It localises to the chloroplast thylakoid membrane. In terms of biological role, seems to be required for the assembly of the photosystem I complex. The polypeptide is Photosystem I assembly protein Ycf4 (Crucihimalaya wallichii (Rock-cress)).